Reading from the N-terminus, the 691-residue chain is Methionine--tRNA ligase (691 aa).

The 'HIGH' region motif lies at P14–H24. Positions 148, 151, 161, and 164 each coordinate Zn(2+). Residues K344–S348 carry the 'KMSKS' region motif. K347 provides a ligand contact to ATP. One can recognise a tRNA-binding domain in the interval D585–R691.

Belongs to the class-I aminoacyl-tRNA synthetase family. MetG type 1 subfamily. In terms of assembly, homodimer. It depends on Zn(2+) as a cofactor.

The protein resides in the cytoplasm. The catalysed reaction is tRNA(Met) + L-methionine + ATP = L-methionyl-tRNA(Met) + AMP + diphosphate. Is required not only for elongation of protein synthesis but also for the initiation of all mRNA translation through initiator tRNA(fMet) aminoacylation. The protein is Methionine--tRNA ligase of Verminephrobacter eiseniae (strain EF01-2).